We begin with the raw amino-acid sequence, 214 residues long: Probable nicotinate-nucleotide adenylyltransferase (214 aa).

Belongs to the NadD family.

It catalyses the reaction nicotinate beta-D-ribonucleotide + ATP + H(+) = deamido-NAD(+) + diphosphate. It participates in cofactor biosynthesis; NAD(+) biosynthesis; deamido-NAD(+) from nicotinate D-ribonucleotide: step 1/1. In terms of biological role, catalyzes the reversible adenylation of nicotinate mononucleotide (NaMN) to nicotinic acid adenine dinucleotide (NaAD). This Mycolicibacterium vanbaalenii (strain DSM 7251 / JCM 13017 / BCRC 16820 / KCTC 9966 / NRRL B-24157 / PYR-1) (Mycobacterium vanbaalenii) protein is Probable nicotinate-nucleotide adenylyltransferase.